Reading from the N-terminus, the 750-residue chain is Photosystem I P700 chlorophyll a apoprotein A1 (750 aa).

Helical transmembrane passes span 70–93 (VFSAHFGQLSIIFLWLSGMYFHGA), 156–179 (LYCTAIGALIFAALMLFAGWFHYH), 195–219 (LNHHLAGLLGLGSLSWAGHQIHVSL), 291–309 (IAHHHLAIAILFLIAGHMY), 346–369 (WHAQLSLNLAMLGSTTIVVAHHMY), 385–411 (LSLFTHHMWIGGFLIVGAAAHAAIFMV), 433–455 (AIISHLNWVCIFLGFHSFGLYIH), and 531–549 (FLVHHIHAFTIHVTVLILL). [4Fe-4S] cluster-binding residues include Cys573 and Cys582. Transmembrane regions (helical) follow at residues 589–610 (HVFLGLFWMYNAISVVIFHFSW) and 664–686 (LSAYGLFFLGAHFVWAFSLMFLF). His675 contributes to the chlorophyll a' binding site. Chlorophyll a is bound by residues Met683 and Tyr691. Trp692 provides a ligand contact to phylloquinone. The chain crosses the membrane as a helical span at residues 724 to 744 (AVGVTHYLLGGIATTWAFFLA).

Belongs to the PsaA/PsaB family. The PsaA/B heterodimer binds the P700 chlorophyll special pair and subsequent electron acceptors. PSI consists of a core antenna complex that captures photons, and an electron transfer chain that converts photonic excitation into a charge separation. The eukaryotic PSI reaction center is composed of at least 11 subunits. Requires P700 is a chlorophyll a/chlorophyll a' dimer, A0 is one or more chlorophyll a, A1 is one or both phylloquinones and FX is a shared 4Fe-4S iron-sulfur center. as cofactor.

It localises to the plastid. It is found in the chloroplast thylakoid membrane. It catalyses the reaction reduced [plastocyanin] + hnu + oxidized [2Fe-2S]-[ferredoxin] = oxidized [plastocyanin] + reduced [2Fe-2S]-[ferredoxin]. Its function is as follows. PsaA and PsaB bind P700, the primary electron donor of photosystem I (PSI), as well as the electron acceptors A0, A1 and FX. PSI is a plastocyanin-ferredoxin oxidoreductase, converting photonic excitation into a charge separation, which transfers an electron from the donor P700 chlorophyll pair to the spectroscopically characterized acceptors A0, A1, FX, FA and FB in turn. Oxidized P700 is reduced on the lumenal side of the thylakoid membrane by plastocyanin. The chain is Photosystem I P700 chlorophyll a apoprotein A1 from Triticum aestivum (Wheat).